Consider the following 23-residue polypeptide: Alpha-conotoxin-like RgIB (23 aa).

Disulfide bonds link Cys-5/Cys-11 and Cys-6/Cys-19. The segment at 7–9 (KNP) is lacks the Ser-Xaa-Pro motif that is crucial for potent interaction with nAChR.

Expressed by venom duct.

Its subcellular location is the secreted. Its function is as follows. Alpha-conotoxins act on postsynaptic membranes, they bind to the nicotinic acetylcholine receptors (nAChR) and thus inhibit them. Is a specific blocker of the alpha-3-beta-4/CHRNA3-CHRNB4 image nAChR and may also block alpha-3-beta-4-alpha-5 (CHRNA3-CHRNB4-CHRNA5) channels. Has possibly a distinct nAChR binding mode from other alpha-conotoxins, due to a different three residue motif (lacks the Ser-Xaa-Pro motif). In vivo, causes hyperactivity and behavioral disorders in mice following intracranial injection. This chain is Alpha-conotoxin-like RgIB, found in Conus regius (Crown cone).